We begin with the raw amino-acid sequence, 141 residues long: Nucleoside diphosphate kinase (141 aa).

Positions 11, 59, 87, 93, 104, and 114 each coordinate ATP. Catalysis depends on His-117, which acts as the Pros-phosphohistidine intermediate.

It belongs to the NDK family. As to quaternary structure, homotetramer. Mg(2+) serves as cofactor.

Its subcellular location is the cytoplasm. It carries out the reaction a 2'-deoxyribonucleoside 5'-diphosphate + ATP = a 2'-deoxyribonucleoside 5'-triphosphate + ADP. It catalyses the reaction a ribonucleoside 5'-diphosphate + ATP = a ribonucleoside 5'-triphosphate + ADP. Functionally, major role in the synthesis of nucleoside triphosphates other than ATP. The ATP gamma phosphate is transferred to the NDP beta phosphate via a ping-pong mechanism, using a phosphorylated active-site intermediate. The polypeptide is Nucleoside diphosphate kinase (Acidovorax ebreus (strain TPSY) (Diaphorobacter sp. (strain TPSY))).